The chain runs to 747 residues: Putative T-box protein 31 (747 aa).

The segment at residues 33–199 is a DNA-binding region (T-box); sequence QMLTKRKKTN…AGPAAKKTPD (167 aa). Disordered stretches follow at residues 268-289 and 332-364; these read SLSSPAALKHDSTVSSDSDFDD and SINNPGYLSTASSPAALNQDSSASEKSSIVRDK. Positions 332–358 are enriched in polar residues; it reads SINNPGYLSTASSPAALNQDSSASEKS.

The protein localises to the nucleus. The protein is Putative T-box protein 31 (tbx-31) of Caenorhabditis elegans.